The chain runs to 347 residues: Rhodopsin (347 aa).

Over 1–33 (TEGPDFYIPMVNTTGVVRSPYEYPQYYLVNPAA) the chain is Extracellular. The N-linked (GlcNAc...) asparagine glycan is linked to N12. Residues 34 to 58 (FAVLGAYMFFLIIIGFPINFLTLYV) traverse the membrane as a helical segment. The Cytoplasmic segment spans residues 59–70 (TLEHKKLRTPLN). Residues 71–93 (YILLNLAVADLFMVIGGFTTTMY) form a helical membrane-spanning segment. The Extracellular portion of the chain corresponds to 94-107 (SSMHGYFVLGRLGC). C107 and C184 form a disulfide bridge. The chain crosses the membrane as a helical span at residues 108–130 (NIEGFFATLGGMISLWSLAVLAI). The short motif at 131 to 133 (ERW) is the 'Ionic lock' involved in activated form stabilization element. At 131–149 (ERWVVVCKPISNFRFGENH) the chain is on the cytoplasmic side. A helical transmembrane segment spans residues 150–170 (AIMGVSLTWVMALACTVPPLV). Residues 171–199 (GWSRYIPEGMQCACGIDYYTRAEGYNNES) are Extracellular-facing. N197 is a glycosylation site (N-linked (GlcNAc...) asparagine). The chain crosses the membrane as a helical span at residues 200 to 221 (FVIYMFTFHFLFPMFIIFFCYG). At 222-249 (RLLCAVKEAAAAQQESETTQRAEREVTR) the chain is on the cytoplasmic side. The helical transmembrane segment at 250 to 271 (MVILMVIGYLVCWLPYASVAWF) threads the bilayer. Residues 272–283 (IFTHKGSEFGPL) are Extracellular-facing. The helical transmembrane segment at 284–305 (FMAVPSFFAKSSSIYNPIIYIC) threads the bilayer. Position 293 is an N6-(retinylidene)lysine (K293). Residues 306-347 (MNKQFRQCMITTLFCGKNPFEGQEEDSSTKTEASSASSVSPA) are Cytoplasmic-facing. C320 carries the S-palmitoyl cysteine lipid modification. The segment at 326 to 347 (EGQEEDSSTKTEASSASSVSPA) is disordered. The segment covering 335-347 (KTEASSASSVSPA) has biased composition (low complexity).

Belongs to the G-protein coupled receptor 1 family. Opsin subfamily. In terms of processing, phosphorylated on some or all of the serine and threonine residues present in the C-terminal region. Post-translationally, contains one covalently linked retinal chromophore.

The protein localises to the membrane. It localises to the cell projection. It is found in the cilium. Its subcellular location is the photoreceptor outer segment. Its function is as follows. Photoreceptor required for image-forming vision at low light intensity. While most salt water fish species use retinal as chromophore, most freshwater fish use 3-dehydroretinal, or a mixture of retinal and 3-dehydroretinal. Light-induced isomerization of 11-cis to all-trans retinal triggers a conformational change that activates signaling via G-proteins. Subsequent receptor phosphorylation mediates displacement of the bound G-protein alpha subunit by arrestin and terminates signaling. The chain is Rhodopsin (rho) from Sargocentron tiere (Blue lined squirrelfish).